Here is a 228-residue protein sequence, read N- to C-terminus: 7-cyano-7-deazaguanine synthase (228 aa).

8-18 is a binding site for ATP; it reads LSGGLDSTTCL. Positions 188, 198, 201, and 204 each coordinate Zn(2+).

It belongs to the QueC family. Requires Zn(2+) as cofactor.

The enzyme catalyses 7-carboxy-7-deazaguanine + NH4(+) + ATP = 7-cyano-7-deazaguanine + ADP + phosphate + H2O + H(+). It functions in the pathway purine metabolism; 7-cyano-7-deazaguanine biosynthesis. Its function is as follows. Catalyzes the ATP-dependent conversion of 7-carboxy-7-deazaguanine (CDG) to 7-cyano-7-deazaguanine (preQ(0)). The protein is 7-cyano-7-deazaguanine synthase of Legionella pneumophila (strain Paris).